Here is a 501-residue protein sequence, read N- to C-terminus: MVLEMLNPMNISSMVSEAVLFGSIAILLLIGLLLWVWNYEDTSSIPGPGYFLGIGPLISHFRFLWMGIGSACNYYNKMYGEFMRVWIGGEETLIISKSSSIFHIMKHNHYTCRFGSKLGLECIGMHEKGIMFNNNPALWKAVRPFFTKALSGPGLVRMVTVCADSITKHLDKLEEVRNDLGYVDVLTLMRRIMLDTSNNLFLGIPLDESALVHKVQGYFDAWQALLLKPDIFFKISWLYRKYEKSVKDLKDAMEILIEEKRHRISTAEKLEDSMDFTTQLIFAEKRGELTKENVNQCVLEMMIAAPDTMSITVFFMLFLIANHPQVEEELMKEIYTVVGERDIRNDDMQKLKVVENFIYESMRYQPVVDFVMRKALEDDVIDGYPVKKGTNIILNIGRMHRLEFFPKPNEFTLENFAKNVPYRYFQPFGFGPRACAGKYIAMVMMKVILVTLLRRFQVQTQQGQCVEKMQKKNDLSLHPHETSGLLEMIFIPRNSDKCLEH.

Heme is bound at residue cysteine 435.

The protein belongs to the cytochrome P450 family. Requires heme as cofactor. In terms of tissue distribution, ovary.

The protein localises to the membrane. The catalysed reaction is testosterone + 3 reduced [NADPH--hemoprotein reductase] + 3 O2 = 17beta-estradiol + formate + 3 oxidized [NADPH--hemoprotein reductase] + 4 H2O + 4 H(+). It catalyses the reaction androst-4-ene-3,17-dione + 3 reduced [NADPH--hemoprotein reductase] + 3 O2 = estrone + formate + 3 oxidized [NADPH--hemoprotein reductase] + 4 H2O + 4 H(+). Functionally, catalyzes the formation of aromatic C18 estrogens from C19 androgens. This chain is Aromatase 3 (CYP19A3), found in Sus scrofa (Pig).